Consider the following 512-residue polypeptide: D-alanine--D-alanyl carrier protein ligase (512 aa).

152 to 153 contacts ATP; that stretch reads TS. Residue Asp199 participates in D-alanine binding. 294-299 lines the ATP pocket; it reads NAYGPT. Residue Val303 participates in D-alanine binding. Residues Asp385, 397 to 400, and Lys499 contribute to the ATP site; that span reads YGGR. Residue Lys499 coordinates D-alanine.

Belongs to the ATP-dependent AMP-binding enzyme family. DltA subfamily.

It localises to the cytoplasm. It catalyses the reaction holo-[D-alanyl-carrier protein] + D-alanine + ATP = D-alanyl-[D-alanyl-carrier protein] + AMP + diphosphate. It participates in cell wall biogenesis; lipoteichoic acid biosynthesis. Its function is as follows. Catalyzes the first step in the D-alanylation of lipoteichoic acid (LTA), the activation of D-alanine and its transfer onto the D-alanyl carrier protein (Dcp) DltC. In an ATP-dependent two-step reaction, forms a high energy D-alanyl-AMP intermediate, followed by transfer of the D-alanyl residue as a thiol ester to the phosphopantheinyl prosthetic group of the Dcp. D-alanylation of LTA plays an important role in modulating the properties of the cell wall in Gram-positive bacteria, influencing the net charge of the cell wall. The protein is D-alanine--D-alanyl carrier protein ligase of Streptococcus pyogenes serotype M1.